A 254-amino-acid polypeptide reads, in one-letter code: Glucosamine-6-phosphate deaminase (254 aa).

The active-site Proton acceptor; for enolization step is the aspartate 67. The For ring-opening step role is filled by asparagine 136. The Proton acceptor; for ring-opening step role is filled by histidine 138. Residue glutamate 143 is the For ring-opening step of the active site.

It belongs to the glucosamine/galactosamine-6-phosphate isomerase family. NagB subfamily.

The catalysed reaction is alpha-D-glucosamine 6-phosphate + H2O = beta-D-fructose 6-phosphate + NH4(+). The protein operates within amino-sugar metabolism; N-acetylneuraminate degradation; D-fructose 6-phosphate from N-acetylneuraminate: step 5/5. Functionally, catalyzes the reversible isomerization-deamination of glucosamine 6-phosphate (GlcN6P) to form fructose 6-phosphate (Fru6P) and ammonium ion. The sequence is that of Glucosamine-6-phosphate deaminase from Brevibacillus brevis (strain 47 / JCM 6285 / NBRC 100599).